The following is a 160-amino-acid chain: Cytochrome b6-f complex subunit 4 (160 aa).

3 helical membrane passes run 36–56, 95–115, and 131–151; these read LLYIFPVVILGTIACNVGLAV, LLGVLLMVSVPTGLLTVPFLE, and TVFLIGTAVALWLGIGATLPI.

This sequence belongs to the cytochrome b family. PetD subfamily. As to quaternary structure, the 4 large subunits of the cytochrome b6-f complex are cytochrome b6, subunit IV (17 kDa polypeptide, petD), cytochrome f and the Rieske protein, while the 4 small subunits are petG, petL, petM and petN. The complex functions as a dimer.

It localises to the plastid. The protein resides in the chloroplast thylakoid membrane. Component of the cytochrome b6-f complex, which mediates electron transfer between photosystem II (PSII) and photosystem I (PSI), cyclic electron flow around PSI, and state transitions. The protein is Cytochrome b6-f complex subunit 4 of Oryza sativa (Rice).